Reading from the N-terminus, the 116-residue chain is Large ribosomal subunit protein uL18 (116 aa).

The protein belongs to the universal ribosomal protein uL18 family. Part of the 50S ribosomal subunit; part of the 5S rRNA/L5/L18/L25 subcomplex. Contacts the 5S and 23S rRNAs.

This is one of the proteins that bind and probably mediate the attachment of the 5S RNA into the large ribosomal subunit, where it forms part of the central protuberance. The polypeptide is Large ribosomal subunit protein uL18 (Shewanella baltica (strain OS223)).